The sequence spans 211 residues: tRNA (guanine-N(7)-)-methyltransferase (211 aa).

Residues Glu44, Asp69, Asp96, and Asp118 each contribute to the S-adenosyl-L-methionine site. Asp118 is an active-site residue. Lys122 is a binding site for substrate. An interaction with RNA region spans residues 124–129; sequence RHEKRR. Substrate-binding positions include Asp154 and 191 to 194; that span reads TEYE.

It belongs to the class I-like SAM-binding methyltransferase superfamily. TrmB family.

It catalyses the reaction guanosine(46) in tRNA + S-adenosyl-L-methionine = N(7)-methylguanosine(46) in tRNA + S-adenosyl-L-homocysteine. It functions in the pathway tRNA modification; N(7)-methylguanine-tRNA biosynthesis. Its function is as follows. Catalyzes the formation of N(7)-methylguanine at position 46 (m7G46) in tRNA. The polypeptide is tRNA (guanine-N(7)-)-methyltransferase (Streptococcus pneumoniae (strain Taiwan19F-14)).